The sequence spans 193 residues: Phosphoheptose isomerase (193 aa).

The region spanning 37–193 (LAASFKADGK…QLIEKEMASV (157 aa)) is the SIS domain. 52–54 (NGG) contacts substrate. The Zn(2+) site is built by histidine 61 and glutamate 65. Substrate-binding positions include glutamate 65, 93–94 (ND), 119–121 (STS), serine 124, and glutamine 172. Positions 172 and 180 each coordinate Zn(2+).

This sequence belongs to the SIS family. GmhA subfamily. Homotetramer. Zn(2+) serves as cofactor.

The protein localises to the cytoplasm. The catalysed reaction is 2 D-sedoheptulose 7-phosphate = D-glycero-alpha-D-manno-heptose 7-phosphate + D-glycero-beta-D-manno-heptose 7-phosphate. It functions in the pathway carbohydrate biosynthesis; D-glycero-D-manno-heptose 7-phosphate biosynthesis; D-glycero-alpha-D-manno-heptose 7-phosphate and D-glycero-beta-D-manno-heptose 7-phosphate from sedoheptulose 7-phosphate: step 1/1. Functionally, catalyzes the isomerization of sedoheptulose 7-phosphate in D-glycero-D-manno-heptose 7-phosphate. This Edwardsiella ictaluri (strain 93-146) protein is Phosphoheptose isomerase.